A 189-amino-acid polypeptide reads, in one-letter code: Frataxin-like protein, mitochondrial (189 aa).

The transit peptide at 1–50 (MNCARLHQRIPLRAMALTTTSYPALAPSHSFANASTSVMTASAMAVAHRA) directs the protein to the mitochondrion.

Belongs to the frataxin family. Interacts with IscU; the interaction is direct.

Its subcellular location is the mitochondrion. It carries out the reaction 4 Fe(2+) + O2 + 4 H(+) = 4 Fe(3+) + 2 H2O. Iron-binding protein which binds 2 iron atoms per monomer. Probably, acts as an iron carrier for the biosynthesis of Fe-S clusters. Stimulates the cysteine desulphurase activity of IscS in the presence of IscU. The polypeptide is Frataxin-like protein, mitochondrial (Leishmania donovani).